Here is a 243-residue protein sequence, read N- to C-terminus: PKPPAEAKPAAKPAAPPAAANPFEGVDVKDPIVISAATRIQASFRMHKNRMALKEKSIPKFSQVLKDMFVMEGSAVTFFARVWGIPDPVIKWFKDGQEVKQGPKHEIKFDDKDGTFLIIRNADGDDVGTYTCQATNSFGEAFDSARLALEVPAKCTKQPDNITVKAGGNFEIKVEIAGEPEPDVIWTKGKKEIDEGGRFSYEDSPDYSILRVEKAQAGDAGKYEIEIVNDLGKARAYCTVKVN.

Residues 1-22 (PKPPAEAKPAAKPAAPPAAANP) are disordered. Positions 7 to 20 (AKPAAKPAAPPAAA) are enriched in low complexity. Residues 35 to 62 (SAATRIQASFRMHKNRMALKEKSIPKFS) form the IQ domain. Ig-like C2-type domains follow at residues 59–150 (PKFS…LALE) and 151–243 (VPAK…VKVN).

In terms of biological role, this protein is the target of CAVP, which binds to it in a calcium-dependent manner. The protein is CAVP-target protein of Branchiostoma lanceolatum (Common lancelet).